Here is a 290-residue protein sequence, read N- to C-terminus: ATP synthase gamma chain (290 aa).

It belongs to the ATPase gamma chain family. In terms of assembly, F-type ATPases have 2 components, CF(1) - the catalytic core - and CF(0) - the membrane proton channel. CF(1) has five subunits: alpha(3), beta(3), gamma(1), delta(1), epsilon(1). CF(0) has four main subunits: a, b, b' and c.

The protein localises to the cellular chromatophore membrane. Functionally, produces ATP from ADP in the presence of a proton gradient across the membrane. The gamma chain is believed to be important in regulating ATPase activity and the flow of protons through the CF(0) complex. In Rhodobacter capsulatus (Rhodopseudomonas capsulata), this protein is ATP synthase gamma chain.